The following is a 397-amino-acid chain: Mannonate dehydratase (397 aa).

It belongs to the mannonate dehydratase family. Requires Fe(2+) as cofactor. It depends on Mn(2+) as a cofactor.

The catalysed reaction is D-mannonate = 2-dehydro-3-deoxy-D-gluconate + H2O. It functions in the pathway carbohydrate metabolism; pentose and glucuronate interconversion. Catalyzes the dehydration of D-mannonate. This chain is Mannonate dehydratase, found in Yersinia pseudotuberculosis serotype O:1b (strain IP 31758).